Here is a 1212-residue protein sequence, read N- to C-terminus: Dermatan-sulfate epimerase-like protein (1212 aa).

The signal sequence occupies residues 1–20; sequence MALMFTGHLLFLALLMFAFS. Residues asparagine 28, asparagine 666, asparagine 688, and asparagine 709 are each glycosylated (N-linked (GlcNAc...) asparagine). Transmembrane regions (helical) follow at residues 764 to 784 and 803 to 823; these read IIFP…CISL and WILI…WSTC. An N-linked (GlcNAc...) asparagine glycan is attached at asparagine 874.

The protein belongs to the dermatan-sulfate isomerase family. Expressed in different brain areas as well as in multiple other peripheral tissues.

It localises to the membrane. The chain is Dermatan-sulfate epimerase-like protein (DSEL) from Homo sapiens (Human).